Here is a 99-residue protein sequence, read N- to C-terminus: Signal recognition particle 19 kDa protein (99 aa).

This sequence belongs to the SRP19 family. In terms of assembly, part of the signal recognition particle protein translocation system, which is composed of SRP and FtsY. Archaeal SRP consists of a 7S RNA molecule of 300 nucleotides and two protein subunits: SRP54 and SRP19.

It is found in the cytoplasm. Functionally, involved in targeting and insertion of nascent membrane proteins into the cytoplasmic membrane. Binds directly to 7S RNA and mediates binding of the 54 kDa subunit of the SRP. In Pyrococcus horikoshii (strain ATCC 700860 / DSM 12428 / JCM 9974 / NBRC 100139 / OT-3), this protein is Signal recognition particle 19 kDa protein.